We begin with the raw amino-acid sequence, 476 residues long: Argininosuccinate lyase (476 aa).

Residues 1–17 (MTDTGSSDTNTDTTGTS) are compositionally biased toward low complexity. Residues 1-22 (MTDTGSSDTNTDTTGTSKANTM) are disordered.

This sequence belongs to the lyase 1 family. Argininosuccinate lyase subfamily.

The protein resides in the cytoplasm. It catalyses the reaction 2-(N(omega)-L-arginino)succinate = fumarate + L-arginine. It participates in amino-acid biosynthesis; L-arginine biosynthesis; L-arginine from L-ornithine and carbamoyl phosphate: step 3/3. This is Argininosuccinate lyase from Jannaschia sp. (strain CCS1).